A 181-amino-acid polypeptide reads, in one-letter code: Large ribosomal subunit protein uL5 (181 aa).

It belongs to the universal ribosomal protein uL5 family. As to quaternary structure, part of the 50S ribosomal subunit; part of the 5S rRNA/L5/L18/L25 subcomplex. Contacts the 5S rRNA and the P site tRNA. Forms a bridge to the 30S subunit in the 70S ribosome.

Its function is as follows. This is one of the proteins that bind and probably mediate the attachment of the 5S RNA into the large ribosomal subunit, where it forms part of the central protuberance. In the 70S ribosome it contacts protein S13 of the 30S subunit (bridge B1b), connecting the 2 subunits; this bridge is implicated in subunit movement. Contacts the P site tRNA; the 5S rRNA and some of its associated proteins might help stabilize positioning of ribosome-bound tRNAs. The chain is Large ribosomal subunit protein uL5 from Mesomycoplasma hyopneumoniae (strain 7448) (Mycoplasma hyopneumoniae).